The following is a 291-amino-acid chain: Phosphate-binding protein PstS 2 (291 aa).

A signal peptide spans 1–21 (MKFKKMLTLAAIGLSGFGLVA). Residue cysteine 22 is the site of N-palmitoyl cysteine attachment. Cysteine 22 carries the S-diacylglycerol cysteine lipid modification.

It belongs to the PstS family. As to quaternary structure, the complex is composed of two ATP-binding proteins (PstB), two transmembrane proteins (PstC and PstA) and a solute-binding protein (PstS).

The protein resides in the cell membrane. In terms of biological role, part of the ABC transporter complex PstSACB involved in phosphate import. This is Phosphate-binding protein PstS 2 (pstS2) from Streptococcus pneumoniae serotype 4 (strain ATCC BAA-334 / TIGR4).